The sequence spans 515 residues: Recombining binding protein suppressor of hairless-like protein (515 aa).

The disordered stretch occupies residues 1–40 (MDPRETTDPSLPPGPLTHLSLPDSSEVRLQSDGPSLLGSW). DNA-binding regions lie at residues 76–86 (QKSYGNEKRFF), 191–196 (SKPSQK), and 218–223 (RLRSQT). The region spanning 384–474 (PLISTLELSG…YPSPFSFTYT (91 aa)) is the IPT/TIG domain.

It belongs to the Su(H) family. As to quaternary structure, interacts weakly with EBNA2. Does not interact with any Notch proteins. Highly expressed in lung. Also detected in spleen, and brain.

The protein localises to the nucleus. In terms of biological role, putative transcription factor, which cooperates with EBNA2 to activate transcription. The sequence is that of Recombining binding protein suppressor of hairless-like protein (Rbpjl) from Mus musculus (Mouse).